Reading from the N-terminus, the 362-residue chain is Acyl-CoA-binding domain-containing protein 3 (362 aa).

The signal sequence occupies residues 1-22 (MEVFLEMLLTAVVALLFSFLLA). Disordered regions lie at residues 132–151 (QDEQ…SPEN) and 193–214 (VEKS…EKTE). Positions 192-221 (RVEKSSNMVEESDAEAENEEKTELTIEEDD) form a coiled coil. An ACB domain is found at 231-318 (LEKAFAAAVN…VSKEIPGLTK (88 aa)). An acyl-CoA contacts are provided by residues 260–264 (FGLHK), K286, and Y305. The interval 329 to 362 (METSVGLPPNSGSLEDPTNLVTTGVDESSKNGIP) is disordered.

This sequence belongs to the ACBP family. As to expression, expressed in roots, stems, leaves, flowers and siliques.

It is found in the secreted. The protein localises to the extracellular space. Binds medium- and long-chain acyl-CoA esters with very high affinity. Can interact in vitro with arachidonyl-CoA, barely with oleoyl-CoA, but not with palmitoyl-CoA. In Arabidopsis thaliana (Mouse-ear cress), this protein is Acyl-CoA-binding domain-containing protein 3 (ACBP3).